The following is a 268-amino-acid chain: MKRIALLVQYDGSNYSGWQRQKNATTVQETLERALFKITHQVVKTFAAGRTDAGVHASGQVVHFNIDCVIPANSYSDILNGLLPSAIRILESVEVKDSWHSCYSAMYRHYRYVINNSKFPNLFINNWSWHRYQKILDEVLMSNASKLMEGEHDFFAFQKSGSQRKNSITKIKNVEIKRVEDLILVDIKATGFLYGMVRLIVGQLVLVGEKKISPEIFTDIWVNQKKNDVKESAPAKGLCFVNAVYEENVFKKINNNDFFPVFLIKGFS.

Aspartate 52 acts as the Nucleophile in catalysis. Tyrosine 110 serves as a coordination point for substrate.

The protein belongs to the tRNA pseudouridine synthase TruA family. Homodimer.

The enzyme catalyses uridine(38/39/40) in tRNA = pseudouridine(38/39/40) in tRNA. In terms of biological role, formation of pseudouridine at positions 38, 39 and 40 in the anticodon stem and loop of transfer RNAs. This is tRNA pseudouridine synthase A from Prochlorococcus marinus (strain MIT 9312).